A 2737-amino-acid chain; its full sequence is Non-reducing polyketide synthase ATEG_07661 (2737 aa).

Residues 75–245 (SRSLAELDSW…VRYDQTRATV (171 aa)) are N-terminal acylcarrier protein transacylase domain (SAT). Cys154 acts as the Nucleophile; for transacylase activity in catalysis. The Proton donor/acceptor; for transacylase activity role is filled by His276. A Ketosynthase family 3 (KS3) domain is found at 427–854 (NEAIAIVGMS…GSNASMIITE (428 aa)). Active-site for beta-ketoacyl synthase activity residues include Cys603, His738, and His777. The malonyl-CoA:ACP transacylase (MAT) stretch occupies residues 969–1260 (FGGQVSRFVG…IMASRAIAQS (292 aa)). The N-terminal hotdog fold stretch occupies residues 1368–1503 (LQSLWNFVEF…ASVEMRAPTD (136 aa)). The 316-residue stretch at 1368-1683 (LQSLWNFVEF…YGRVAKASMS (316 aa)) folds into the PKS/mFAS DH domain. The product template (PT) domain stretch occupies residues 1399–1681 (FVLSHVIAQT…VQYGRVAKAS (283 aa)). His1403 (proton acceptor; for dehydratase activity) is an active-site residue. The interval 1535 to 1683 (VEVLQGRNVY…YGRVAKASMS (149 aa)) is C-terminal hotdog fold. Asp1592 serves as the catalytic Proton donor; for dehydratase activity. The disordered stretch occupies residues 1724–1747 (SRTTKKKAKASKSKSSVKKDKAPS). Residues 1725 to 1739 (RTTKKKAKASKSKSS) show a composition bias toward basic residues. One can recognise a Carrier domain in the interval 1750–1824 (RDITDEVRNL…KFVACVSNAL (75 aa)). Ser1784 carries the O-(pantetheine 4'-phosphoryl)serine modification. Positions 1827–1876 (PNQGQSSIDEDDEDDEHSEDSSNESSSAASDEDASSGLESPDTGILTPED) are disordered. Positions 1834-1848 (IDEDDEDDEHSEDSS) are enriched in acidic residues. Over residues 1849–1866 (NESSSAASDEDASSGLES) the composition is skewed to low complexity. Residues 2094 to 2270 (ADRIQSSSGS…GFGHVDWTDG (177 aa)) are methyltransferase domain. Residues 2362 to 2665 (VVLVTGATGS…IPFKDWISRV (304 aa)) are NADPH-binding domain.

It participates in secondary metabolite biosynthesis. Non-reducing polyketide synthase; part of the cluster B that mediates the biosynthesis of azasperpyranones, members of the azaphilone family that exhibit anti-cancer activities. Azasperpyranones are synthesized by 2 clusters, A and B. Cluster A is responsible for the production of the polyhydric phenol moiety while the azaphilonoid scaffold is produced by the cluster B. The non-reducing polyketide synthase ATEG_03629 produces 5-methyl orsellinic acid, which is then reduced to 5-methyl orsellinic aldehyde by the NRPS-like protein ATEG_03630. 5-methyl orsellinic aldehyde is then first hydroxylated by the FAD-dependent monooxygenase ATEG_03635 and subsequently hydroxylated by the cytochrome P450 monooxygenase ATEG_03631 to produce the unstable polyhydric phenol precursor of azasperpyranones. On the other hand, the polyketide synthase ATEG_07659 is responsible for producing the 3,5-dimethyloctadienone moiety from acetyl-CoA, three malonyl-CoA, and two S-adenosyl methionines (SAM). The 3,5-dimethyloctadienone moiety is then loaded onto the SAT domain of ATEG_07661 and extended with four malonyl-CoA and one SAM, which leads to the formation of 2,4-dihydroxy-6-(5,7-dimethyl-2-oxo-trans-3-trans-5-nonadienyl)-3-methylbenzaldehyde (compound 8) after reductive release and aldol condensation. The FAD-dependent monooxygenase ATEG_07662 is the next enzyme in the biosynthesis sequence and hydroxylates the side chain at the benzylic position of compound 8. In Aspergillus nidulans, afoF, the ortholog of the FAD-dependent oxygenase ATEG_07660, is the key enzyme for the biosynthesis of asperfuranone by catalyzing the hydroxylation at C-8 of to prevent the formation of a six-membered ring hemiacetal intermediate and thus facilitating the formation of a five-membered ring to produce asperfuranone. In Aspergillus terreus, ATEG_07660 is probably not functional, which leads to the formation of the six-membered ring hemiacetal intermediate presperpyranone instead of asperfuranone. Finally, ATEG_03636 is involved in the condensation of the polyhydric phenol moiety produced by cluster A and the perasperpyranone precursor produced by cluster B, to yield azasperpyranone A. Further modifications of azasperpyranone A result in the production of derivatives, including azasperpyranone B to F. The polypeptide is Non-reducing polyketide synthase ATEG_07661 (Aspergillus terreus (strain NIH 2624 / FGSC A1156)).